A 358-amino-acid chain; its full sequence is Aromatic amino acid aminotransferase (358 aa).

An N6-(pyridoxal phosphate)lysine modification is found at Lys219.

It belongs to the class-II pyridoxal-phosphate-dependent aminotransferase family. Homodimer. Pyridoxal 5'-phosphate serves as cofactor.

The enzyme catalyses an aromatic L-alpha-amino acid + 2-oxoglutarate = an aromatic oxo-acid + L-glutamate. Its function is as follows. Aminotransferase that catalyzes the conversion of aromatic amino acids and 2-oxoglutarate into corresponding aromatic oxo acids and L-glutamate. The sequence is that of Aromatic amino acid aminotransferase from Nocardia farcinica (strain IFM 10152).